The primary structure comprises 63 residues: Conotoxin Vi5.1a (63 aa).

The first 22 residues, 1-22 (MRCVPVFIILLLLIPSAPSADA), serve as a signal peptide directing secretion. Residues 23–50 (QPKTKDDVPLASYHDNAERTLQRLWNQR) constitute a propeptide that is removed on maturation. P62 carries the post-translational modification Proline amide.

Belongs to the conotoxin T superfamily. Post-translationally, contains 2 disulfide bonds that can be either 'C1-C3, C2-C4' or 'C1-C4, C2-C3', since these disulfide connectivities have been observed for conotoxins with cysteine framework V (for examples, see AC P0DQQ7 and AC P81755). In terms of tissue distribution, expressed by the venom duct.

Its subcellular location is the secreted. In Conus virgo (Virgin cone), this protein is Conotoxin Vi5.1a.